Consider the following 944-residue polypeptide: Breast cancer type 2 susceptibility protein homolog (944 aa).

Composition is skewed to basic and acidic residues over residues K325–I348 and N415–N431. Disordered regions lie at residues K325 to D354 and N415 to Q440. BRCA2 repeat units lie at residues A543–S577, N644–A678, and S719–A753. Disordered regions lie at residues L823–A854 and S876–Y944. 2 stretches are compositionally biased toward polar residues: residues I838 to D852 and S876 to A885. A compositionally biased stretch (basic and acidic residues) spans A904–A921. Over residues K932 to Y944 the composition is skewed to basic residues.

As to quaternary structure, interacts with Rad9 and spn-A/Rad51.

It is found in the nucleus. In terms of biological role, involved in and required for double-strand break repair by meiotic and mitotic homologous recombination. During meiosis, has a dual role in the repair of meiotic double-stranded breaks and the efficient activation of the meiotic recombination checkpoint. This Drosophila simulans (Fruit fly) protein is Breast cancer type 2 susceptibility protein homolog.